We begin with the raw amino-acid sequence, 86 residues long: Large ribosomal subunit protein bL31 (86 aa).

This sequence belongs to the bacterial ribosomal protein bL31 family. Type A subfamily. In terms of assembly, part of the 50S ribosomal subunit.

Its function is as follows. Binds the 23S rRNA. The sequence is that of Large ribosomal subunit protein bL31 from Parasynechococcus marenigrum (strain WH8102).